We begin with the raw amino-acid sequence, 234 residues long: Uridylate kinase (234 aa).

ATP-binding positions include 8 to 11, Gly-51, and Arg-55; that span reads KLSG. Residues Asp-68 and 129-136 each bind UMP; that span reads TSNPFFTT. 3 residues coordinate ATP: Thr-156, Tyr-162, and Asp-165.

Belongs to the UMP kinase family. In terms of assembly, homohexamer.

The protein localises to the cytoplasm. It carries out the reaction UMP + ATP = UDP + ADP. Its pathway is pyrimidine metabolism; CTP biosynthesis via de novo pathway; UDP from UMP (UMPK route): step 1/1. Its activity is regulated as follows. Inhibited by UTP. In terms of biological role, catalyzes the reversible phosphorylation of UMP to UDP. This Fervidobacterium nodosum (strain ATCC 35602 / DSM 5306 / Rt17-B1) protein is Uridylate kinase.